A 362-amino-acid polypeptide reads, in one-letter code: Myricetin 3'/5'-O-methyltransferase 1 (362 aa).

Position 229 (Asp-229) interacts with S-adenosyl-L-methionine. Residue His-267 is the Proton acceptor of the active site.

The protein belongs to the class I-like SAM-binding methyltransferase superfamily. Cation-independent O-methyltransferase family. In terms of assembly, homodimer. In terms of tissue distribution, mainly expressed in leaves secreting glandular trichomes types 1 and 4 and, to a lesser extent, in storage trichomes type 6.

The enzyme catalyses myricetin + S-adenosyl-L-methionine = laricitrin + S-adenosyl-L-homocysteine + H(+). The catalysed reaction is laricitrin + S-adenosyl-L-methionine = syringetin + S-adenosyl-L-homocysteine + H(+). It carries out the reaction a 3'-hydroxyflavone + S-adenosyl-L-methionine = a 3'-methoxyflavone + S-adenosyl-L-homocysteine + H(+). It catalyses the reaction a 5'-hydroxy-3'-methoxyflavone + S-adenosyl-L-methionine = a 3',5'-dimethoxyflavone + S-adenosyl-L-homocysteine + H(+). The enzyme catalyses quercetin + S-adenosyl-L-methionine = isorhamnetin + S-adenosyl-L-homocysteine + H(+). The catalysed reaction is rhamnetin + S-adenosyl-L-methionine = rhamnacene + S-adenosyl-L-homocysteine + H(+). It carries out the reaction 3',4',5,7-tetrahydroxy-3-methoxyflavone + S-adenosyl-L-methionine = 3,3'-O-dimethylquercetin + S-adenosyl-L-homocysteine + H(+). It functions in the pathway flavonoid metabolism. Its function is as follows. Flavonoid 3'/5'-O-methyltransferase involved in the biosynthesis of polymethoxylated flavonoids natural products such as myricetin derivatives, aroma compounds possessing antioxidant properties and exhibiting pharmacological activities such as anti-carcinogen, anti-viral, anti-thrombotic, anti-diabetic, anti-atherosclerotic, and anti-inflammatory effects. Catalyzes S-adenosylmethionine-dependent regioselective 3'/5'-O-methylation of flavonoids; active on various hydroxylated flavonoid substrates, including myricetin and quercetin, but inactive toward kaempferol. Mediates the formation of 3'-methyl derivatives from quercetin, myricetin, 3-methyl quercetin and 7-methyl quercetin (rhamnetin), producing 3'-methyl quercetin (isorhamnetin), 3'-methyl myricetin (laricitrin), 3,3'-dimethyl quercetin (3-O-methylisorhamnetin) and 7,3'-dimethyl quercetin (7-O-methylisorhamnetin), respectively. Triggers the 5'-O-methylation of 3'-methyl myricetin (laricitrin), thus leading to production of 3',5'-dimethyl myricetin (syringetin). This is Myricetin 3'/5'-O-methyltransferase 1 from Solanum habrochaites (Wild tomato).